Reading from the N-terminus, the 498-residue chain is Sulfate adenylyltransferase subunit 1 (498 aa).

Residues 30–246 form the tr-type G domain; the sequence is TRPLRLITCG…LELATTRSAQ (217 aa). The segment at 39 to 46 is G1; sequence GSVDDGKS. GTP is bound at residue 39–46; it reads GSVDDGKS. The G2 stretch occupies residues 97-101; the sequence is GITID. The interval 118 to 121 is G3; the sequence is DTPG. Residues 118 to 122 and 173 to 176 contribute to the GTP site; these read DTPGH and NKID. Residues 173-176 form a G4 region; it reads NKID. Residues 210-212 form a G5 region; sequence SAL.

It belongs to the TRAFAC class translation factor GTPase superfamily. Classic translation factor GTPase family. CysN/NodQ subfamily. As to quaternary structure, heterodimer composed of CysD, the smaller subunit, and CysN.

The catalysed reaction is sulfate + ATP + H(+) = adenosine 5'-phosphosulfate + diphosphate. Its pathway is sulfur metabolism; hydrogen sulfide biosynthesis; sulfite from sulfate: step 1/3. In terms of biological role, with CysD forms the ATP sulfurylase (ATPS) that catalyzes the adenylation of sulfate producing adenosine 5'-phosphosulfate (APS) and diphosphate, the first enzymatic step in sulfur assimilation pathway. APS synthesis involves the formation of a high-energy phosphoric-sulfuric acid anhydride bond driven by GTP hydrolysis by CysN coupled to ATP hydrolysis by CysD. The polypeptide is Sulfate adenylyltransferase subunit 1 (Rhizobium meliloti (strain 1021) (Ensifer meliloti)).